The chain runs to 321 residues: Secreted RxLR effector protein 71 (321 aa).

The signal sequence occupies residues 1–23; the sequence is MRPTGWRWPVLSLLLVLLPFQAA. The RxLR motif lies at 84-87; that stretch reads RSLR. N-linked (GlcNAc...) asparagine glycosylation is present at N114. The disordered stretch occupies residues 210–237; it reads VSLGRDGNGPVRGISSSPTRLTRPRMGG.

Belongs to the RxLR effector family.

Its subcellular location is the secreted. It is found in the host cell. Functionally, secreted effector that partially suppresses the host cell death induced by cell death-inducing proteins. This chain is Secreted RxLR effector protein 71, found in Plasmopara viticola (Downy mildew of grapevine).